Reading from the N-terminus, the 459-residue chain is Prenyltransferase penI (459 aa).

Residues 107–108 (VV) and E111 contribute to the L-tryptophan site. Residues R126, R276, K278, Y280, and Y384 each coordinate substrate.

It belongs to the tryptophan dimethylallyltransferase family.

The enzyme catalyses quinolinone B + dimethylallyl diphosphate = peniprequinolone + diphosphate. The protein operates within secondary metabolite biosynthesis. Its pathway is alkaloid biosynthesis. It participates in mycotoxin biosynthesis. In terms of biological role, prenyltransferase; part of the gene cluster that mediates the biosynthesis of penigequinolones, potent insecticidal alkaloids that contain a highly modified 10-carbon prenyl group. The first stage is catalyzed by the nonribosomal peptide synthetase penN that condenses anthranilic acid and O-methyl-L-tyrosine to produce 4'-methoxycyclopeptin. 4'-methoxycyclopeptin is then converted to 4'-methoxydehydrocyclopeptin by the ketoglutarate-dependent dioxygenase penM through dehydrogenation to form a double bond between C-alpha and C-beta of the O-methyltyrosine side chain. PenM also converts its first product methoxydehydrocyclopeptin to 4'-methoxycyclopenin. The following conversion of 4'methoxycyclopenin into 4'-methoxyviridicatin is catalyzed by the cyclopenase penL. 4'-methoxyviridicatin is the precursor of quinolone natural products, and is further converted to quinolinone B. The prenyltransferase penI then catalyzes the canonical Friedel-Crafts alkylation of quinolinone B with dimethylallyl cation to yield dimethylallyl quinolone, which is subjected to FAD-dependent dehydrogenation by the FAD-linked oxidoreductase penH to yield conjugated aryl diene. The delta(3') double bond then serves as the site of the second alkylation with DMAPP catalyzed by the prenyltransferase penG to yield a carbenium ion intermediate, which can be attacked by H(2)O to yield a styrenyl quinolone containing a C3'-hydroxyprenyl chain, or undergo cyclization to yield yaequinolones J1 and J2. The conversion of the styrenyl quinolone into the tetrahydrofuran-containing yaequinolone C is performed by the FAD-dependent monooxygenase penE and involves epoxidation of the terminal C7'-C8' olefin, followed by epoxide ring opening initiated by the C3' hydroxyl group. The predicted cysteine hydrolase penJ acts as an epoxide hydrolase that enhances the rate of the 5-exo-tet cyclization step, increasing the yield of yaequinolone C. PenF catalyzes the cationic rearrangement of the epoxide formed by penE (before ring opening to produce yaequinolone C) into yaequinolone D. Finally, the short-chain dehydrogenase/reductase (SDR)-like reductase penD, catalyzes both the dehydration of yaequinolone D and the reduction of the resulting oxonium to yield penigequinolone. The sequence is that of Prenyltransferase penI from Penicillium thymicola.